The following is a 144-amino-acid chain: Putative pre-16S rRNA nuclease (144 aa).

This sequence belongs to the YqgF nuclease family.

It is found in the cytoplasm. Could be a nuclease involved in processing of the 5'-end of pre-16S rRNA. This is Putative pre-16S rRNA nuclease from Pseudomonas paraeruginosa (strain DSM 24068 / PA7) (Pseudomonas aeruginosa (strain PA7)).